Here is a 465-residue protein sequence, read N- to C-terminus: ATP synthase subunit beta (465 aa).

Residue 148 to 155 (GGAGVGKT) participates in ATP binding.

The protein belongs to the ATPase alpha/beta chains family. In terms of assembly, F-type ATPases have 2 components, CF(1) - the catalytic core - and CF(0) - the membrane proton channel. CF(1) has five subunits: alpha(3), beta(3), gamma(1), delta(1), epsilon(1). CF(0) has three main subunits: a(1), b(2) and c(9-12). The alpha and beta chains form an alternating ring which encloses part of the gamma chain. CF(1) is attached to CF(0) by a central stalk formed by the gamma and epsilon chains, while a peripheral stalk is formed by the delta and b chains.

It localises to the cell inner membrane. The enzyme catalyses ATP + H2O + 4 H(+)(in) = ADP + phosphate + 5 H(+)(out). In terms of biological role, produces ATP from ADP in the presence of a proton gradient across the membrane. The catalytic sites are hosted primarily by the beta subunits. The polypeptide is ATP synthase subunit beta (Neisseria gonorrhoeae (strain ATCC 700825 / FA 1090)).